A 75-amino-acid polypeptide reads, in one-letter code: UPF0270 protein PP_1747 (75 aa).

Belongs to the UPF0270 family.

The chain is UPF0270 protein PP_1747 from Pseudomonas putida (strain ATCC 47054 / DSM 6125 / CFBP 8728 / NCIMB 11950 / KT2440).